Reading from the N-terminus, the 449-residue chain is UDP-N-acetylmuramoylalanine--D-glutamate ligase (449 aa).

118-124 (GTNGKTT) is an ATP binding site.

It belongs to the MurCDEF family.

It is found in the cytoplasm. The enzyme catalyses UDP-N-acetyl-alpha-D-muramoyl-L-alanine + D-glutamate + ATP = UDP-N-acetyl-alpha-D-muramoyl-L-alanyl-D-glutamate + ADP + phosphate + H(+). It participates in cell wall biogenesis; peptidoglycan biosynthesis. Its function is as follows. Cell wall formation. Catalyzes the addition of glutamate to the nucleotide precursor UDP-N-acetylmuramoyl-L-alanine (UMA). This chain is UDP-N-acetylmuramoylalanine--D-glutamate ligase, found in Staphylococcus aureus (strain Mu3 / ATCC 700698).